A 155-amino-acid polypeptide reads, in one-letter code: Ribonuclease H (155 aa).

The RNase H type-1 domain occupies 4-145 (QQKVVEIYTD…ADALARKAIA (142 aa)). Residues Asp13, Glu51, Asp73, and Asp137 each coordinate Mg(2+).

Belongs to the RNase H family. As to quaternary structure, monomer. It depends on Mg(2+) as a cofactor.

The protein localises to the cytoplasm. It catalyses the reaction Endonucleolytic cleavage to 5'-phosphomonoester.. Endonuclease that specifically degrades the RNA of RNA-DNA hybrids. This is Ribonuclease H from Bartonella tribocorum (strain CIP 105476 / IBS 506).